A 143-amino-acid chain; its full sequence is MTVKKIALVAHDRMKKELIEWIKKHQNLLKHHELYATGSTGQAIEKTLNVTVTKMESGPLGGDLQLGAKIVNKEIDILIFFWDPLEAQPHDPDVRALLRIAVVWNLPVACNASTADYLLTSPLFDSDYHPETPDYEAYRNRII.

The 143-residue stretch at 1 to 143 (MTVKKIALVA…DYEAYRNRII (143 aa)) folds into the MGS-like domain. Substrate contacts are provided by residues H11, K15, 37–40 (TGST), and 57–58 (SG). The active-site Proton donor/acceptor is D63. H90 lines the substrate pocket.

It belongs to the methylglyoxal synthase family.

It carries out the reaction dihydroxyacetone phosphate = methylglyoxal + phosphate. Catalyzes the formation of methylglyoxal from dihydroxyacetone phosphate. In Coxiella burnetii (strain Dugway 5J108-111), this protein is Methylglyoxal synthase.